A 400-amino-acid polypeptide reads, in one-letter code: 3-hydroxybenzoate 6-hydroxylase (400 aa).

Belongs to the 3-hydroxybenzoate 6-hydroxylase family. Monomer. FAD serves as cofactor.

It catalyses the reaction 3-hydroxybenzoate + NADH + O2 + H(+) = 2,5-dihydroxybenzoate + NAD(+) + H2O. Functionally, catalyzes the NAD- or NADP-dependent conversion of 3-hydroxybenzoate to gentisate. The affinity of the enzyme toward NAD is twice as high as for NADP. The chain is 3-hydroxybenzoate 6-hydroxylase (nagX) from Polaromonas naphthalenivorans (strain CJ2).